Here is a 141-residue protein sequence, read N- to C-terminus: Large ribosomal subunit protein uL11 (141 aa).

It belongs to the universal ribosomal protein uL11 family. Part of the ribosomal stalk of the 50S ribosomal subunit. Interacts with L10 and the large rRNA to form the base of the stalk. L10 forms an elongated spine to which L12 dimers bind in a sequential fashion forming a multimeric L10(L12)X complex. Post-translationally, one or more lysine residues are methylated.

Its function is as follows. Forms part of the ribosomal stalk which helps the ribosome interact with GTP-bound translation factors. The sequence is that of Large ribosomal subunit protein uL11 from Synechococcus sp. (strain ATCC 27144 / PCC 6301 / SAUG 1402/1) (Anacystis nidulans).